The sequence spans 102 residues: Cytochrome c oxidase subunit 6a, mitochondrial (102 aa).

The transit peptide at 1–36 (MATAIVRSALSRAVTRAAPKTSVAPKRNFSSSAGHD) directs the protein to the mitochondrion.

It belongs to the cytochrome c oxidase subunit 6A (TC 3.D.4.11) family.

Its subcellular location is the mitochondrion inner membrane. Its function is as follows. This protein is one of the nuclear-coded polypeptide chains of cytochrome c oxidase, the terminal oxidase in mitochondrial electron transport. This is Cytochrome c oxidase subunit 6a, mitochondrial (COX6A) from Arabidopsis thaliana (Mouse-ear cress).